The primary structure comprises 240 residues: Uridylate kinase (240 aa).

13 to 16 (KLSG) is a binding site for ATP. Positions 21–26 (GDDGFG) are involved in allosteric activation by GTP. G55 provides a ligand contact to UMP. ATP contacts are provided by G56 and R60. UMP contacts are provided by residues D75 and 136–143 (IGNPYFST). Positions 164, 170, and 173 each coordinate ATP.

This sequence belongs to the UMP kinase family. Homohexamer.

The protein localises to the cytoplasm. It carries out the reaction UMP + ATP = UDP + ADP. The protein operates within pyrimidine metabolism; CTP biosynthesis via de novo pathway; UDP from UMP (UMPK route): step 1/1. With respect to regulation, allosterically activated by GTP. Inhibited by UTP. Functionally, catalyzes the reversible phosphorylation of UMP to UDP. The sequence is that of Uridylate kinase from Staphylococcus saprophyticus subsp. saprophyticus (strain ATCC 15305 / DSM 20229 / NCIMB 8711 / NCTC 7292 / S-41).